A 568-amino-acid polypeptide reads, in one-letter code: Proton-coupled zinc antiporter SLC30A9, mitochondrial (568 aa).

The transit peptide at 1–67 (MLPGLAAAAA…IGTLSQVKLY (67 aa)) directs the protein to the mitochondrion. 5 helical membrane-spanning segments follow: residues 239–259 (VVMVAICINGLNCFFKFLAWI), 314–334 (GVGIFMMGAGLSWYHGVMGLL), 342–362 (LLWAYCILAGSLVSEGATLLV), 392–412 (VILLEDTAAVLGVIIAATCMG), and 424–444 (SLGSLGVGTLLGMVSAFLIYT). The LXXLL motif signature appears at 462-466 (LTELL).

Belongs to the cation diffusion facilitator (CDF) transporter (TC 2.A.4) family. SLC30A subfamily. As to quaternary structure, interacts with GRIP1, ESR1 and AR. Ubiquitously expressed in fetal and adult tissues and cancer cell lines.

It is found in the mitochondrion membrane. It localises to the nucleus. The protein resides in the endoplasmic reticulum. It carries out the reaction Zn(2+)(in) + 2 H(+)(out) = Zn(2+)(out) + 2 H(+)(in). Its function is as follows. Mitochondrial proton-coupled zinc ion antiporter mediating the export of zinc from the mitochondria and involved in zinc homeostasis, zinc mobilization as well as mitochondrial morphology and health. In nucleus, functions as a secondary coactivator for nuclear receptors by cooperating with p160 coactivators subtypes. Plays a role in transcriptional activation of Wnt-responsive genes. The protein is Proton-coupled zinc antiporter SLC30A9, mitochondrial of Homo sapiens (Human).